We begin with the raw amino-acid sequence, 177 residues long: tRNA (cytidine(56)-2'-O)-methyltransferase (177 aa).

S-adenosyl-L-methionine contacts are provided by residues Leu83 and 108–112 (GAEKV).

It belongs to the aTrm56 family. As to quaternary structure, homodimer.

Its subcellular location is the cytoplasm. The enzyme catalyses cytidine(56) in tRNA + S-adenosyl-L-methionine = 2'-O-methylcytidine(56) in tRNA + S-adenosyl-L-homocysteine + H(+). Functionally, specifically catalyzes the AdoMet-dependent 2'-O-ribose methylation of cytidine at position 56 in tRNAs. This is tRNA (cytidine(56)-2'-O)-methyltransferase from Nitrosopumilus maritimus (strain SCM1).